The primary structure comprises 494 residues: Serine carboxypeptidase-like 21 (494 aa).

An N-terminal signal peptide occupies residues 1 to 23; sequence MGRLVEAIIASILLSLCFTITKS. N-linked (GlcNAc...) asparagine glycans are attached at residues N37 and N69. 3 disulfide bridges follow: C85–C383, C247–C263, and C286–C350. Residue S179 is part of the active site. 2 N-linked (GlcNAc...) asparagine glycosylation sites follow: N198 and N248. An N-linked (GlcNAc...) asparagine glycan is attached at N402. D418 is a catalytic residue. N460 is a glycosylation site (N-linked (GlcNAc...) asparagine). H471 is an active-site residue.

This sequence belongs to the peptidase S10 family. As to expression, expressed in flowers and siliques.

Its subcellular location is the secreted. Its function is as follows. Probable carboxypeptidase. The chain is Serine carboxypeptidase-like 21 (SCPL21) from Arabidopsis thaliana (Mouse-ear cress).